The chain runs to 342 residues: uncharacterized protein (342 aa).

Belongs to the cycloisomerase 2 family.

This is an uncharacterized protein from Staphylococcus aureus (strain bovine RF122 / ET3-1).